A 132-amino-acid chain; its full sequence is Small ribosomal subunit protein uS8 (132 aa).

This sequence belongs to the universal ribosomal protein uS8 family. As to quaternary structure, part of the 30S ribosomal subunit. Contacts proteins S5 and S12.

In terms of biological role, one of the primary rRNA binding proteins, it binds directly to 16S rRNA central domain where it helps coordinate assembly of the platform of the 30S subunit. This chain is Small ribosomal subunit protein uS8, found in Streptococcus pyogenes serotype M1.